A 155-amino-acid polypeptide reads, in one-letter code: Small ribosomal subunit protein uS7c (155 aa).

It belongs to the universal ribosomal protein uS7 family. In terms of assembly, part of the 30S ribosomal subunit.

It is found in the plastid. Its subcellular location is the chloroplast. In terms of biological role, one of the primary rRNA binding proteins, it binds directly to 16S rRNA where it nucleates assembly of the head domain of the 30S subunit. The chain is Small ribosomal subunit protein uS7c (rps7) from Dioscorea bulbifera (Air potato).